The primary structure comprises 327 residues: rRNA 2'-O-methyltransferase fibrillarin (327 aa).

The tract at residues 1–95 is disordered; the sequence is MKPGFSPRGG…NQSGKNVMVE (95 aa). Residues 7–80 show a composition bias toward gly residues; that stretch reads PRGGGFGGRG…GGNRGRGGGR (74 aa). An asymmetric dimethylarginine mark is found at Arg8, Arg15, Arg21, Arg24, Arg28, and Arg31. Residues Lys90, Lys108, and Lys115 each participate in a glycyl lysine isopeptide (Lys-Gly) (interchain with G-Cter in SUMO2) cross-link. Lys108 carries the post-translational modification N6-acetyllysine. A Phosphoserine modification is found at Ser122. N6-acetyllysine is present on Lys127. Residues Ser130 and Ser132 each carry the phosphoserine modification. Residues Lys137, Lys149, and Lys164 each participate in a glycyl lysine isopeptide (Lys-Gly) (interchain with G-Cter in SUMO2) cross-link. Residues 178-179 and 197-198 contribute to the S-adenosyl-L-methionine site; these read TT and EF. An N6-acetyllysine mark is found at Lys211 and Lys212. S-adenosyl-L-methionine is bound by residues 222–223 and 242–245; these read DA and DVAQ.

Belongs to the methyltransferase superfamily. Fibrillarin family. Component of box C/D small nucleolar ribonucleoprotein (snoRNP) particles that contain SNU13, FBL, NOP5 and NOP56, plus a guide RNA. It is associated with the U3, U8, U13, X and Y small nuclear RNAs. Component of several ribosomal and nucleolar protein complexes. Part of the small subunit (SSU) processome, composed of more than 70 proteins and the RNA chaperone small nucleolar RNA (snoRNA) U3. Interacts with PRMT5 and UTP20. Interacts with DDX5 and C1QBP. Interacts with NOL11. Interacts with PIH1D1. Interacts with RRP1B. Interacts with NOLC1. Interacts with SDE2. Interacts with NOP2 and NOP56. Post-translationally, by homology to other fibrillarins, some or all of the N-terminal domain arginines are modified to asymmetric dimethylarginine (DMA). Ubiquitinated. Ubiquitination leads to proteasomal degradation. Deubiquitinated by USP36. In terms of processing, acetylated by CREBBP/CBP, preventing methylation of 'Gln-105' of histone H2A (H2AQ104me), without affecting rRNA methylation. Deacetylation by SIRT7 restores methylation of 'Gln-105' of histone H2A (H2AQ104me).

Its subcellular location is the nucleus. It localises to the nucleolus. The protein localises to the nucleoplasm. It carries out the reaction L-glutaminyl-[histone H2A] + S-adenosyl-L-methionine = N(5)-methyl-L-glutaminyl-[histone H2A] + S-adenosyl-L-homocysteine + H(+). The catalysed reaction is a ribonucleotide in rRNA + S-adenosyl-L-methionine = a 2'-O-methylribonucleotide in rRNA + S-adenosyl-L-homocysteine + H(+). The enzyme catalyses a ribonucleotide in U6 snRNA + S-adenosyl-L-methionine = a 2'-O-methylribonucleotide in U6 snRNA + S-adenosyl-L-homocysteine + H(+). Functionally, S-adenosyl-L-methionine-dependent methyltransferase that has the ability to methylate both RNAs and proteins. Involved in pre-rRNA processing by catalyzing the site-specific 2'-hydroxyl methylation of ribose moieties in pre-ribosomal RNA. Site specificity is provided by a guide RNA that base pairs with the substrate. Methylation occurs at a characteristic distance from the sequence involved in base pairing with the guide RNA. Probably catalyzes 2'-O-methylation of U6 snRNAs in box C/D RNP complexes. U6 snRNA 2'-O-methylation is required for mRNA splicing fidelity. Also acts as a protein methyltransferase by mediating methylation of 'Gln-105' of histone H2A (H2AQ104me), a modification that impairs binding of the FACT complex and is specifically present at 35S ribosomal DNA locus. Part of the small subunit (SSU) processome, first precursor of the small eukaryotic ribosomal subunit. During the assembly of the SSU processome in the nucleolus, many ribosome biogenesis factors, an RNA chaperone and ribosomal proteins associate with the nascent pre-rRNA and work in concert to generate RNA folding, modifications, rearrangements and cleavage as well as targeted degradation of pre-ribosomal RNA by the RNA exosome. The polypeptide is rRNA 2'-O-methyltransferase fibrillarin (Mus musculus (Mouse)).